Reading from the N-terminus, the 294-residue chain is 4-hydroxy-tetrahydrodipicolinate synthase (294 aa).

Thr47 serves as a coordination point for pyruvate. Tyr135 (proton donor/acceptor) is an active-site residue. Residue Lys163 is the Schiff-base intermediate with substrate of the active site. Residue Thr205 coordinates pyruvate.

It belongs to the DapA family. In terms of assembly, homotetramer; dimer of dimers.

It is found in the cytoplasm. It carries out the reaction L-aspartate 4-semialdehyde + pyruvate = (2S,4S)-4-hydroxy-2,3,4,5-tetrahydrodipicolinate + H2O + H(+). It functions in the pathway amino-acid biosynthesis; L-lysine biosynthesis via DAP pathway; (S)-tetrahydrodipicolinate from L-aspartate: step 3/4. Catalyzes the condensation of (S)-aspartate-beta-semialdehyde [(S)-ASA] and pyruvate to 4-hydroxy-tetrahydrodipicolinate (HTPA). This is 4-hydroxy-tetrahydrodipicolinate synthase from Rickettsia felis (strain ATCC VR-1525 / URRWXCal2) (Rickettsia azadi).